The sequence spans 427 residues: Protein adenylyltransferase Fic (427 aa).

A helical transmembrane segment spans residues 17–37 (LLLASLAGLSIAIIVTHAPVF). TPR repeat units lie at residues 77 to 110 (ALAA…APHH) and 111 to 143 (PEIL…NPLD). The short motif at 200-205 (SNAIEG) is the Inhibitory (S/T)XXXE(G/N) motif element. Residues E204 and 286-289 (VSDH) contribute to the ATP site. Positions 255-390 (ITIDDIIEIH…IRPFIRFVAR (136 aa)) constitute a Fido domain. H333 is an active-site residue. ATP is bound by residues 337-344 (DGNGRTAR), 369-370 (YY), and N377.

Belongs to the fic family. As to quaternary structure, homodimer.

It is found in the membrane. It catalyses the reaction L-tyrosyl-[protein] + ATP = O-(5'-adenylyl)-L-tyrosyl-[protein] + diphosphate. It carries out the reaction L-threonyl-[protein] + ATP = 3-O-(5'-adenylyl)-L-threonyl-[protein] + diphosphate. The enzyme catalyses 3-O-(5'-adenylyl)-L-threonyl-[protein] + H2O = L-threonyl-[protein] + AMP + H(+). Its activity is regulated as follows. The side chain of Glu-204 determines which of the two opposing activities (AMPylase or de-AMPylase) will take place. In response to endoplasmic reticulum stress, mediates de-AMPylase activity. Adenylyltransferase activity is inhibited by the inhibitory helix present at the N-terminus: Glu-204 binds ATP and competes with ATP-binding at Arg-344, thereby preventing adenylyltransferase activity. In unstressed cells, disengagement of Glu-204 promotes adenylyltransferase activity. Activation dissociates ATP-binding from Glu-204, allowing ordered binding of the entire ATP moiety with the alpha-phosphate in an orientation that is productive for accepting an incoming target hydroxyl side chain. Functionally, protein that can both mediate the addition of adenosine 5'-monophosphate (AMP) to specific residues of target proteins (AMPylation), and the removal of the same modification from target proteins (de-AMPylation), depending on the context. The side chain of Glu-204 determines which of the two opposing activities (AMPylase or de-AMPylase) will take place. Acts as a key regulator of the unfolded protein response (UPR) by mediating AMPylation or de-AMPylation of Hsc70-3/BiP. In unstressed cells, acts as an adenylyltransferase by mediating AMPylation of Hsc70-3/BiP, thereby inactivating it. In response to endoplasmic reticulum stress, acts as a phosphodiesterase by mediating removal of ATP (de-AMPylation) from Hsc70-3/BiP, leading to restore HSPA5/BiP activity. The polypeptide is Protein adenylyltransferase Fic (Nematostella vectensis (Starlet sea anemone)).